The following is a 214-amino-acid chain: Pyridoxine/pyridoxamine 5'-phosphate oxidase (214 aa).

Residues 8-11 (RTNY) and lysine 66 contribute to the substrate site. FMN contacts are provided by residues 61 to 66 (RIVLIK), 76 to 77 (FT), arginine 82, lysine 83, and glutamine 105. Substrate contacts are provided by tyrosine 123, arginine 127, and serine 131. FMN is bound by residues 140-141 (QS) and tryptophan 184. 190-192 (RLH) lines the substrate pocket. Position 194 (arginine 194) interacts with FMN.

The protein belongs to the pyridoxamine 5'-phosphate oxidase family. Homodimer. FMN is required as a cofactor.

The enzyme catalyses pyridoxamine 5'-phosphate + O2 + H2O = pyridoxal 5'-phosphate + H2O2 + NH4(+). The catalysed reaction is pyridoxine 5'-phosphate + O2 = pyridoxal 5'-phosphate + H2O2. The protein operates within cofactor metabolism; pyridoxal 5'-phosphate salvage; pyridoxal 5'-phosphate from pyridoxamine 5'-phosphate: step 1/1. Its pathway is cofactor metabolism; pyridoxal 5'-phosphate salvage; pyridoxal 5'-phosphate from pyridoxine 5'-phosphate: step 1/1. Its function is as follows. Catalyzes the oxidation of either pyridoxine 5'-phosphate (PNP) or pyridoxamine 5'-phosphate (PMP) into pyridoxal 5'-phosphate (PLP). This is Pyridoxine/pyridoxamine 5'-phosphate oxidase from Burkholderia pseudomallei (strain 1106a).